The sequence spans 224 residues: Large ribosomal subunit protein uL1m (224 aa).

It belongs to the universal ribosomal protein uL1 family.

It is found in the mitochondrion. This chain is Large ribosomal subunit protein uL1m (RPL1), found in Reclinomonas americana.